Consider the following 384-residue polypeptide: Queuine tRNA-ribosyltransferase (384 aa).

D92 (proton acceptor) is an active-site residue. Substrate is bound by residues 92-96 (DSGGF), D146, Q190, and G217. The interval 248–254 (GVGRPED) is RNA binding. D267 (nucleophile) is an active-site residue. The tract at residues 272 to 276 (TRHAR) is RNA binding; important for wobble base 34 recognition. 4 residues coordinate Zn(2+): C305, C307, C310, and H337.

This sequence belongs to the queuine tRNA-ribosyltransferase family. As to quaternary structure, homodimer. Within each dimer, one monomer is responsible for RNA recognition and catalysis, while the other monomer binds to the replacement base PreQ1. Zn(2+) is required as a cofactor.

It catalyses the reaction 7-aminomethyl-7-carbaguanine + guanosine(34) in tRNA = 7-aminomethyl-7-carbaguanosine(34) in tRNA + guanine. The protein operates within tRNA modification; tRNA-queuosine biosynthesis. Functionally, catalyzes the base-exchange of a guanine (G) residue with the queuine precursor 7-aminomethyl-7-deazaguanine (PreQ1) at position 34 (anticodon wobble position) in tRNAs with GU(N) anticodons (tRNA-Asp, -Asn, -His and -Tyr). Catalysis occurs through a double-displacement mechanism. The nucleophile active site attacks the C1' of nucleotide 34 to detach the guanine base from the RNA, forming a covalent enzyme-RNA intermediate. The proton acceptor active site deprotonates the incoming PreQ1, allowing a nucleophilic attack on the C1' of the ribose to form the product. After dissociation, two additional enzymatic reactions on the tRNA convert PreQ1 to queuine (Q), resulting in the hypermodified nucleoside queuosine (7-(((4,5-cis-dihydroxy-2-cyclopenten-1-yl)amino)methyl)-7-deazaguanosine). This chain is Queuine tRNA-ribosyltransferase, found in Xylella fastidiosa (strain 9a5c).